We begin with the raw amino-acid sequence, 500 residues long: MSIIDTRTPEPKRFISGATGDWEVVIGMEVHAQVTSESKLFSGASTAFGAEPNSNVSLVDAAMPGMLPVINLECVRQAVRTGIGLNAQINLKSVFDRKNYFYPDLPQGYQISQFKQPIVGEGKIMISVGPDNKGQFEDVEIGIERLHLEQDAGKSMHDQHPTMSYVDLNRSGVALMEIVSKPDLRSSDEARAYLTKLRTIVRYLGTCDGNMDEGSMRADVNVSVRRPGGEFGTRCEIKNVNSIRFVGQAIEYEARRQIAILEDGGVIDQETRLFDPVKGETRSMRSKEEAHDYRYFPDPDLLPLEFDQAFVDALAAKLPELPDVKKQRLVETLGISVYDASILVTEKAIADYYEAVAEGRDGKAAANWVINDLLGALNKAGKDIEESPISPAQLGAIIDLIKEGTISGKIAKDLFEIVWNEGGDPKKLVEERGMKQVTDTGAIEKAVDDVIAANPDKVEQAKAKPTLAGWFVGQVMKATGGKANPQAVNELVKSKLGIEE.

Belongs to the GatB/GatE family. GatB subfamily. As to quaternary structure, heterotrimer of A, B and C subunits.

The enzyme catalyses L-glutamyl-tRNA(Gln) + L-glutamine + ATP + H2O = L-glutaminyl-tRNA(Gln) + L-glutamate + ADP + phosphate + H(+). The catalysed reaction is L-aspartyl-tRNA(Asn) + L-glutamine + ATP + H2O = L-asparaginyl-tRNA(Asn) + L-glutamate + ADP + phosphate + 2 H(+). Allows the formation of correctly charged Asn-tRNA(Asn) or Gln-tRNA(Gln) through the transamidation of misacylated Asp-tRNA(Asn) or Glu-tRNA(Gln) in organisms which lack either or both of asparaginyl-tRNA or glutaminyl-tRNA synthetases. The reaction takes place in the presence of glutamine and ATP through an activated phospho-Asp-tRNA(Asn) or phospho-Glu-tRNA(Gln). This chain is Aspartyl/glutamyl-tRNA(Asn/Gln) amidotransferase subunit B, found in Brucella melitensis biotype 2 (strain ATCC 23457).